The primary structure comprises 483 residues: Protein nucleotidyltransferase YdiU (483 aa).

Glycine 100, glycine 102, arginine 103, lysine 123, aspartate 135, glycine 136, arginine 189, and arginine 196 together coordinate ATP. The active-site Proton acceptor is the aspartate 265. The Mg(2+) site is built by asparagine 266 and aspartate 275. Aspartate 275 is a binding site for ATP.

This sequence belongs to the SELO family. Mg(2+) serves as cofactor. Requires Mn(2+) as cofactor.

It catalyses the reaction L-seryl-[protein] + ATP = 3-O-(5'-adenylyl)-L-seryl-[protein] + diphosphate. The enzyme catalyses L-threonyl-[protein] + ATP = 3-O-(5'-adenylyl)-L-threonyl-[protein] + diphosphate. The catalysed reaction is L-tyrosyl-[protein] + ATP = O-(5'-adenylyl)-L-tyrosyl-[protein] + diphosphate. It carries out the reaction L-histidyl-[protein] + UTP = N(tele)-(5'-uridylyl)-L-histidyl-[protein] + diphosphate. It catalyses the reaction L-seryl-[protein] + UTP = O-(5'-uridylyl)-L-seryl-[protein] + diphosphate. The enzyme catalyses L-tyrosyl-[protein] + UTP = O-(5'-uridylyl)-L-tyrosyl-[protein] + diphosphate. Nucleotidyltransferase involved in the post-translational modification of proteins. It can catalyze the addition of adenosine monophosphate (AMP) or uridine monophosphate (UMP) to a protein, resulting in modifications known as AMPylation and UMPylation. The protein is Protein nucleotidyltransferase YdiU of Gloeobacter violaceus (strain ATCC 29082 / PCC 7421).